The primary structure comprises 323 residues: Aspartate carbamoyltransferase catalytic subunit (323 aa).

The carbamoyl phosphate site is built by Arg-71 and Thr-72. Lys-99 provides a ligand contact to L-aspartate. Residues Arg-121, His-151, and Gln-154 each coordinate carbamoyl phosphate. The L-aspartate site is built by Arg-184 and Arg-239. Gly-280 and Pro-281 together coordinate carbamoyl phosphate.

It belongs to the aspartate/ornithine carbamoyltransferase superfamily. ATCase family. In terms of assembly, heterododecamer (2C3:3R2) of six catalytic PyrB chains organized as two trimers (C3), and six regulatory PyrI chains organized as three dimers (R2).

It catalyses the reaction carbamoyl phosphate + L-aspartate = N-carbamoyl-L-aspartate + phosphate + H(+). Its pathway is pyrimidine metabolism; UMP biosynthesis via de novo pathway; (S)-dihydroorotate from bicarbonate: step 2/3. Its function is as follows. Catalyzes the condensation of carbamoyl phosphate and aspartate to form carbamoyl aspartate and inorganic phosphate, the committed step in the de novo pyrimidine nucleotide biosynthesis pathway. The polypeptide is Aspartate carbamoyltransferase catalytic subunit (Cupriavidus pinatubonensis (strain JMP 134 / LMG 1197) (Cupriavidus necator (strain JMP 134))).